Consider the following 164-residue polypeptide: Elicitin-like protein 2 (164 aa).

The first 22 residues, 1–22 (MFSKTLVVLAAVAAVTVNGLTA), serve as a signal peptide directing secretion. 3 disulfides stabilise this stretch: C25-C91, C47-C76, and C71-C118. Residues 121–164 (ISGGGSTPTTAPPSGTTPTTPTTAPPTGTTPGVTPSPTTPKPAC) are disordered. Positions 127–156 (TPTTAPPSGTTPTTPTTAPPTGTTPGVTPS) are enriched in low complexity.

This sequence belongs to the elicitin family.

The protein localises to the secreted. Induces local and distal defense responses (incompatible hypersensitive reaction) in plants from the solanaceae and cruciferae families. Elicits leaf necrosis and causes the accumulation of pathogenesis-related proteins. Might interact with the lipidic molecules of the plasma membrane. In Pythium oligandrum (Mycoparasitic fungus), this protein is Elicitin-like protein 2 (POD-2).